We begin with the raw amino-acid sequence, 409 residues long: Arginine biosynthesis bifunctional protein ArgJ (409 aa).

6 residues coordinate substrate: Thr-156, Lys-182, Thr-193, Glu-280, Asn-404, and Ser-409. Thr-193 functions as the Nucleophile in the catalytic mechanism.

It belongs to the ArgJ family. In terms of assembly, heterotetramer of two alpha and two beta chains.

The protein resides in the cytoplasm. It catalyses the reaction N(2)-acetyl-L-ornithine + L-glutamate = N-acetyl-L-glutamate + L-ornithine. The enzyme catalyses L-glutamate + acetyl-CoA = N-acetyl-L-glutamate + CoA + H(+). It participates in amino-acid biosynthesis; L-arginine biosynthesis; L-ornithine and N-acetyl-L-glutamate from L-glutamate and N(2)-acetyl-L-ornithine (cyclic): step 1/1. Its pathway is amino-acid biosynthesis; L-arginine biosynthesis; N(2)-acetyl-L-ornithine from L-glutamate: step 1/4. In terms of biological role, catalyzes two activities which are involved in the cyclic version of arginine biosynthesis: the synthesis of N-acetylglutamate from glutamate and acetyl-CoA as the acetyl donor, and of ornithine by transacetylation between N(2)-acetylornithine and glutamate. In Ralstonia nicotianae (strain ATCC BAA-1114 / GMI1000) (Ralstonia solanacearum), this protein is Arginine biosynthesis bifunctional protein ArgJ.